Reading from the N-terminus, the 418-residue chain is Putative ion-transport protein YfeO (418 aa).

12 helical membrane-spanning segments follow: residues 10 to 30 (LLLS…LIVV), 54 to 74 (DSPI…GLVI), 99 to 119 (ALPG…SLGP), 120 to 140 (EHPI…RLLP), 149 to 169 (ILAS…AALI), 186 to 206 (LFAP…FFHP), 223 to 243 (ILSG…AVWC), 258 to 278 (VLVL…GGPV), 300 to 320 (DYFL…ASGF), 322 to 342 (GGRI…LHEH), 343 to 363 (VPAV…VLVV), and 371 to 391 (LFMA…CIVM).

It belongs to the chloride channel (TC 2.A.49) family.

Its subcellular location is the cell membrane. The polypeptide is Putative ion-transport protein YfeO (Shigella sonnei (strain Ss046)).